Here is a 530-residue protein sequence, read N- to C-terminus: 3-oxo-5-alpha-steroid 4-dehydrogenase (530 aa).

Residue 33-62 (DVVVVGWGGAGASAAIEAREQGAEVLVIER) coordinates FAD. Residues 395 to 415 (AWQCLFGGLWAFQSMPALALM) traverse the membrane as a helical segment.

The protein belongs to the FAD-dependent oxidoreductase 2 family. It depends on FAD as a cofactor.

It is found in the membrane. It carries out the reaction a 3-oxo-5alpha-steroid + A = a 3-oxo-Delta(4)-steroid + AH2. The enzyme catalyses 5alpha-androstan-3,17-dione + A = androst-4-ene-3,17-dione + AH2. The catalysed reaction is 5alpha-androst-1-ene-3,17-dione + A = androsta-1,4-diene-3,17-dione + AH2. Its activity is regulated as follows. Inhibition occurs with substrate concentrations above 25 uM. Functionally, involved in the degradation of steroids having an A:B ring fusion in a trans configuration. Catalyzes the elimination of hydrogens located at positions 4 and 5 and the introduction of double bonds into ring A. This Comamonas testosteroni (Pseudomonas testosteroni) protein is 3-oxo-5-alpha-steroid 4-dehydrogenase.